We begin with the raw amino-acid sequence, 1127 residues long: Elongation factor-like GTPase 1 (1127 aa).

A tr-type G domain is found at Ala17–Tyr272. GTP is bound by residues Ala26–Thr33, Asp92–His96, and Asn146–Asp149. Residues Lys429–Ser496 are disordered. 2 stretches are compositionally biased toward basic and acidic residues: residues Met438–Lys452 and Ser474–Glu484. Lys528 bears the N6-acetyllysine mark.

It belongs to the TRAFAC class translation factor GTPase superfamily. Classic translation factor GTPase family. As to quaternary structure, associates with the 60S ribosomal subunit. Found in a complex consisting of the 60S ribosomal subunit, SBDS and EFL1.

It carries out the reaction GTP + H2O = GDP + phosphate + H(+). Its activity is regulated as follows. GTPase activity is stimulated in the presence of 60S ribosome subunits. Its function is as follows. GTPase involved in the biogenesis of the 60S ribosomal subunit and translational activation of ribosomes. Together with SBDS, triggers the GTP-dependent release of EIF6 from 60S pre-ribosomes in the cytoplasm, thereby activating ribosomes for translation competence by allowing 80S ribosome assembly and facilitating EIF6 recycling to the nucleus, where it is required for 60S rRNA processing and nuclear export. The polypeptide is Elongation factor-like GTPase 1 (Efl1) (Mus musculus (Mouse)).